Consider the following 454-residue polypeptide: NEDD8-activating enzyme E1 catalytic subunit (454 aa).

Ala2 is modified (N-acetylalanine). 56–80 (GLGCELLKDLALSGFRNLEVIDMDR) contacts ATP. Residue Cys215 is the Glycyl thioester intermediate of the active site.

The protein belongs to the ubiquitin-activating E1 family. UBA3 subfamily. As to quaternary structure, heterodimer of UBA3/ECR1 and AXR1. Interacts with NEDD8 and RCE1. Expressed in shoot, root and floral meristems, in vascular tissues of cotyledons and mature leaves, and in the stele of the root.

It is found in the nucleus. It catalyses the reaction ATP + [NEDD8 protein] + [E1 NEDD8-activating enzyme]-L-cysteine = AMP + diphosphate + [E1 NEDD8-activating enzyme]-S-[NEDD8 protein]-yl-L-cysteine.. It participates in protein modification; protein neddylation. Functionally, catalytic subunit of the dimeric ECR1-AXR1 E1 enzyme. E1 activates NEDD8/RUB1 by first adenylating its C-terminal glycine residue with ATP, thereafter linking this residue to the side chain of the catalytic cysteine, yielding a NEDD8-ECR1 thioester and free AMP. E1 finally transfers NEDD8 to the catalytic cysteine of RCE1. This is NEDD8-activating enzyme E1 catalytic subunit (ECR1) from Arabidopsis thaliana (Mouse-ear cress).